The primary structure comprises 599 residues: Elongation factor 4 (599 aa).

The tr-type G domain occupies 5–187 (SHIRNFSIIA…ELVRLVPPPT (183 aa)). GTP contacts are provided by residues 17–22 (DHGKST) and 134–137 (NKMD).

Belongs to the TRAFAC class translation factor GTPase superfamily. Classic translation factor GTPase family. LepA subfamily.

It is found in the cell inner membrane. It catalyses the reaction GTP + H2O = GDP + phosphate + H(+). Its function is as follows. Required for accurate and efficient protein synthesis under certain stress conditions. May act as a fidelity factor of the translation reaction, by catalyzing a one-codon backward translocation of tRNAs on improperly translocated ribosomes. Back-translocation proceeds from a post-translocation (POST) complex to a pre-translocation (PRE) complex, thus giving elongation factor G a second chance to translocate the tRNAs correctly. Binds to ribosomes in a GTP-dependent manner. This chain is Elongation factor 4, found in Cellvibrio japonicus (strain Ueda107) (Pseudomonas fluorescens subsp. cellulosa).